A 112-amino-acid chain; its full sequence is Large ribosomal subunit protein mL53 (112 aa).

The protein belongs to the mitochondrion-specific ribosomal protein mL53 family. As to quaternary structure, component of the mitochondrial ribosome large subunit (39S) which comprises a 16S rRNA and about 50 distinct proteins.

The protein resides in the mitochondrion. The polypeptide is Large ribosomal subunit protein mL53 (MRPL53) (Pongo abelii (Sumatran orangutan)).